A 160-amino-acid polypeptide reads, in one-letter code: Cytochrome b6-f complex subunit 4 (160 aa).

3 helical membrane-spanning segments follow: residues 36 to 56, 95 to 115, and 128 to 148; these read LLYI…GLAV, LLGI…PFIE, and VAMT…IGAA.

This sequence belongs to the cytochrome b family. PetD subfamily. In terms of assembly, the 4 large subunits of the cytochrome b6-f complex are cytochrome b6, subunit IV (17 kDa polypeptide, PetD), cytochrome f and the Rieske protein, while the 4 small subunits are PetG, PetL, PetM and PetN. The complex functions as a dimer.

It localises to the cellular thylakoid membrane. Component of the cytochrome b6-f complex, which mediates electron transfer between photosystem II (PSII) and photosystem I (PSI), cyclic electron flow around PSI, and state transitions. The polypeptide is Cytochrome b6-f complex subunit 4 (Synechococcus sp. (strain CC9902)).